Reading from the N-terminus, the 886-residue chain is General transcription factor 3C polypeptide 3 (886 aa).

A disordered region spans residues 1–121 (MSGFSPELID…TPEQPTAGDV (121 aa)). Serine 2 is subject to N-acetylserine. A compositionally biased stretch (basic and acidic residues) spans 12–44 (LEGKISFEEFERRREERKTREKKSLQEKGKLSA). Position 43 is a phosphoserine (serine 43). The segment covering 53-63 (VPSSSGINSTK) has biased composition (polar residues). Over residues 92–113 (ENEDDEEEEEEEEEEEEEEETP) the composition is skewed to acidic residues. TPR repeat units follow at residues 149 to 182 (LRGLMGEANIRFARGEREEAILMCMEIIRQAPLA), 183 to 216 (YEPFSTLAMIYEDQGDMEKSLQFELIAAHLNPSD), 217 to 250 (TEEWVRLAEMSLEQDNIKQAIFCYTKALKYEPTN), 252 to 284 (RYLWERSSLYEQMGDHKMAMDGYRRILNLLSPS), 290 to 323 (MQLARDMAKSYYEANDVTSAINIIDEAFSKHQGL), 326 to 361 (MEDVNIAAELYISNKQYDKALEIITDFSGIVLEKKT), 421 to 454 (GDLYLDVAEAFLDVGEYNSALPLLSALVCSERYN), 456 to 489 (AVVWLRHAECLKALGYMERAAESYGKVVDLAPLH), 491 to 523 (DARISLSTLQQQLGQPEKALEALEPMYDPDTLA), 733 to 766 (HALCVLNGHNAFVSGSFKHALGQYVQAFRTHPDE), and 811 to 844 (QESFYNLGRGLHQLGLIHLAIHYYQKALELPPLV). Serine 282 bears the Phosphoserine mark.

In terms of assembly, part of the TFIIIC subcomplex TFIIIC2, consisting of six subunits, GTF3C1, GTF3C2, GTF3C3, GTF3C4, GTF3C5 and GTF3C6. Interacts with BRF1 and TBP.

The protein resides in the nucleus. Functionally, involved in RNA polymerase III-mediated transcription. Integral, tightly associated component of the DNA-binding TFIIIC2 subcomplex that directly binds tRNA and virus-associated RNA promoters. In Homo sapiens (Human), this protein is General transcription factor 3C polypeptide 3 (GTF3C3).